The primary structure comprises 245 residues: Ribosomal RNA small subunit methyltransferase J (245 aa).

S-adenosyl-L-methionine is bound by residues 94–95, 110–111, and Asp-164; these read RD and ER.

Belongs to the methyltransferase superfamily. RsmJ family.

The protein localises to the cytoplasm. The catalysed reaction is guanosine(1516) in 16S rRNA + S-adenosyl-L-methionine = N(2)-methylguanosine(1516) in 16S rRNA + S-adenosyl-L-homocysteine + H(+). Functionally, specifically methylates the guanosine in position 1516 of 16S rRNA. This chain is Ribosomal RNA small subunit methyltransferase J, found in Dechloromonas aromatica (strain RCB).